The sequence spans 208 residues: RNA chaperone ProQ (208 aa).

Residues 106-127 (SKAKVATRRKEQAKKAREEAKA) are compositionally biased toward basic and acidic residues. Positions 106–154 (SKAKVATRRKEQAKKAREEAKAKKTARAATPPKRRPQPAAKKVEQPVET) are disordered.

This sequence belongs to the ProQ family.

Its subcellular location is the cytoplasm. Functionally, RNA chaperone with significant RNA binding, RNA strand exchange and RNA duplexing activities. In Aliivibrio fischeri (strain ATCC 700601 / ES114) (Vibrio fischeri), this protein is RNA chaperone ProQ.